The chain runs to 148 residues: Ribonuclease pancreatic (148 aa).

An N-terminal signal peptide occupies residues 1–25; that stretch reads MGLEKSLLLLPLLVLVLGCVQPSLG. Residues K32 and R35 each coordinate substrate. The active-site Proton acceptor is H37. Disulfide bonds link C50–C108, C64–C119, C82–C134, and C89–C96. Substrate contacts are provided by residues 65-69 and K90; that span reads KPVNT. H143 (proton donor) is an active-site residue.

It belongs to the pancreatic ribonuclease family. As to quaternary structure, monomer. Interacts with and forms tight 1:1 complexes with RNH1. Dimerization of two such complexes may occur. Interaction with RNH1 inhibits this protein. In terms of tissue distribution, pancreas.

The protein localises to the secreted. It carries out the reaction an [RNA] containing cytidine + H2O = an [RNA]-3'-cytidine-3'-phosphate + a 5'-hydroxy-ribonucleotide-3'-[RNA].. It catalyses the reaction an [RNA] containing uridine + H2O = an [RNA]-3'-uridine-3'-phosphate + a 5'-hydroxy-ribonucleotide-3'-[RNA].. Its function is as follows. Endonuclease that catalyzes the cleavage of RNA on the 3' side of pyrimidine nucleotides. Acts on single-stranded and double-stranded RNA. This chain is Ribonuclease pancreatic (RNASE1), found in Gerbillus nigeriae (Nigerian gerbil).